We begin with the raw amino-acid sequence, 1578 residues long: Pentafunctional AROM polypeptide (1578 aa).

Positions 1–384 (MAEPTKIKIL…YEPKASVVPN (384 aa)) are 3-dehydroquinate synthase. NAD(+)-binding positions include 44–46 (DTN), 81–84 (EVSK), 114–116 (GGV), and Asp-119. Position 130 (Arg-130) interacts with 7-phospho-2-dehydro-3-deoxy-D-arabino-heptonate. Residue 139-140 (TT) coordinates NAD(+). Positions 146 and 152 each coordinate 7-phospho-2-dehydro-3-deoxy-D-arabino-heptonate. Lys-161 contributes to the NAD(+) binding site. 7-phospho-2-dehydro-3-deoxy-D-arabino-heptonate is bound at residue Asn-162. NAD(+) is bound by residues 179–182 (FLET) and Asn-190. Residue Glu-194 participates in Zn(2+) binding. 7-phospho-2-dehydro-3-deoxy-D-arabino-heptonate is bound by residues 194–197 (EVIK) and Lys-250. The active-site Proton acceptor; for 3-dehydroquinate synthase activity is Glu-260. 7-phospho-2-dehydro-3-deoxy-D-arabino-heptonate is bound by residues 264 to 268 (RNLLN) and His-271. Residue His-271 participates in Zn(2+) binding. Catalysis depends on His-275, which acts as the Proton acceptor; for 3-dehydroquinate synthase activity. The 7-phospho-2-dehydro-3-deoxy-D-arabino-heptonate site is built by His-287 and Lys-356. His-287 lines the Zn(2+) pocket. Residues 397–842 (VHPGVEPASN…WDTLRQKFSA (446 aa)) are EPSP synthase. Catalysis depends on Cys-824, which acts as the For EPSP synthase activity. Residues 864 to 1055 (TASVFIIGMR…KRKKHSFFVS (192 aa)) form a shikimate kinase region. 871–878 (GMRGAGKT) is an ATP binding site. Residues 1056-1276 (LTLPDLRTAG…AAPGQLSATE (221 aa)) are 3-dehydroquinase. His-1179 acts as the Proton acceptor; for 3-dehydroquinate dehydratase activity in catalysis. Lys-1207 (schiff-base intermediate with substrate; for 3-dehydroquinate dehydratase activity) is an active-site residue. The interval 1289–1578 (QKKFAVFGTP…EDARAAVLSS (290 aa)) is shikimate dehydrogenase.

It in the N-terminal section; belongs to the sugar phosphate cyclases superfamily. Dehydroquinate synthase family. In the 2nd section; belongs to the EPSP synthase family. This sequence in the 3rd section; belongs to the shikimate kinase family. The protein in the 4th section; belongs to the type-I 3-dehydroquinase family. It in the C-terminal section; belongs to the shikimate dehydrogenase family. As to quaternary structure, homodimer. Requires Zn(2+) as cofactor.

It localises to the cytoplasm. The catalysed reaction is 7-phospho-2-dehydro-3-deoxy-D-arabino-heptonate = 3-dehydroquinate + phosphate. The enzyme catalyses 3-dehydroquinate = 3-dehydroshikimate + H2O. It carries out the reaction shikimate + NADP(+) = 3-dehydroshikimate + NADPH + H(+). It catalyses the reaction shikimate + ATP = 3-phosphoshikimate + ADP + H(+). The catalysed reaction is 3-phosphoshikimate + phosphoenolpyruvate = 5-O-(1-carboxyvinyl)-3-phosphoshikimate + phosphate. It participates in metabolic intermediate biosynthesis; chorismate biosynthesis; chorismate from D-erythrose 4-phosphate and phosphoenolpyruvate: step 2/7. Its pathway is metabolic intermediate biosynthesis; chorismate biosynthesis; chorismate from D-erythrose 4-phosphate and phosphoenolpyruvate: step 3/7. It functions in the pathway metabolic intermediate biosynthesis; chorismate biosynthesis; chorismate from D-erythrose 4-phosphate and phosphoenolpyruvate: step 4/7. The protein operates within metabolic intermediate biosynthesis; chorismate biosynthesis; chorismate from D-erythrose 4-phosphate and phosphoenolpyruvate: step 5/7. It participates in metabolic intermediate biosynthesis; chorismate biosynthesis; chorismate from D-erythrose 4-phosphate and phosphoenolpyruvate: step 6/7. In terms of biological role, the AROM polypeptide catalyzes 5 consecutive enzymatic reactions in prechorismate polyaromatic amino acid biosynthesis. The protein is Pentafunctional AROM polypeptide of Aspergillus flavus (strain ATCC 200026 / FGSC A1120 / IAM 13836 / NRRL 3357 / JCM 12722 / SRRC 167).